Reading from the N-terminus, the 451-residue chain is uncharacterized protein (451 aa).

Positions 415-435 are disordered; the sequence is AHGDTEWLPPPHLDHGQPRVN.

This sequence belongs to the Rv1128c/1148c/1588c/1702c/1945/3466 family.

This is an uncharacterized protein from Mycobacterium tuberculosis (strain ATCC 25618 / H37Rv).